We begin with the raw amino-acid sequence, 1396 residues long: DNA-directed RNA polymerase subunit beta' (1396 aa).

Residues Cys70, Cys72, Cys85, and Cys88 each coordinate Zn(2+). Positions 460, 462, and 464 each coordinate Mg(2+). Positions 814, 889, 896, and 899 each coordinate Zn(2+).

Belongs to the RNA polymerase beta' chain family. As to quaternary structure, the RNAP catalytic core consists of 2 alpha, 1 beta, 1 beta' and 1 omega subunit. When a sigma factor is associated with the core the holoenzyme is formed, which can initiate transcription. The cofactor is Mg(2+). Zn(2+) is required as a cofactor.

The catalysed reaction is RNA(n) + a ribonucleoside 5'-triphosphate = RNA(n+1) + diphosphate. Functionally, DNA-dependent RNA polymerase catalyzes the transcription of DNA into RNA using the four ribonucleoside triphosphates as substrates. The protein is DNA-directed RNA polymerase subunit beta' of Hahella chejuensis (strain KCTC 2396).